Here is a 106-residue protein sequence, read N- to C-terminus: uncharacterized protein (106 aa).

Residues 1-23 (MASGAPPLTQKTPSHARRKERRR) form a disordered region. A compositionally biased stretch (basic residues) spans 14–23 (SHARRKERRR).

This is an uncharacterized protein from Treponema pallidum (strain Nichols).